We begin with the raw amino-acid sequence, 218 residues long: Interleukin-37 (218 aa).

The tract at residues 1–40 is disordered; that stretch reads MSFVGENSGVKMGSEDWEKDEPQCCLEDPAGSPLEPGPSL. A propeptide spans 1–45 (removed in mature form); that stretch reads MSFVGENSGVKMGSEDWEKDEPQCCLEDPAGSPLEPGPSLPTMNF. The segment covering 13–22 has biased composition (basic and acidic residues); it reads GSEDWEKDEP.

It belongs to the IL-1 family. As to quaternary structure, interacts with SMAD3. Binds IL18R1, but not to IL1R1, with lower affinity than IL18, and does not seem to act as a receptor antagonist for IL18. Interacts with cargo receptor TMED10; the interaction mediates the translocation from the cytoplasm into the ERGIC (endoplasmic reticulum-Golgi intermediate compartment) and thereby secretion. Proteolytically converted to the mature form by CASP1. In general, low constitutive expression, if any, in healthy tissues; high expression in inflammatory counterparts, including in synovial tissues from individuals with active rheumatoid arthritis. Isoform A, isoform B and isoform C are expressed in testis, colon, placenta, lung and lymph node. Isoform D and isoform E were found only in testis and bone marrow. Whereas only isoform A is found in brain, only isoform B in kidney and only isoform C in heart.

It localises to the cytoplasm. Its subcellular location is the cytosol. The protein resides in the nucleus. The protein localises to the secreted. Immune regulatory cytokine that acts as a suppressor of innate inflammatory and immune responses involved in curbing excessive inflammation. Signaling can occur via two mechanisms, intracellularly through nuclear translocation with SMAD3 and extracellularly after secretion and binding to its receptor composed of IL18R1 and IL18RAP. Suppresses, or reduces, pro-inflammatory cytokine production, including IL1A and IL6, as well as CCL12, CSF1, CSF2, CXCL13, IL1B, IL23A and IL1RN, but spares anti-inflammatory cytokines. Inhibits dendritic cell activation. The protein is Interleukin-37 of Homo sapiens (Human).